A 134-amino-acid chain; its full sequence is Large ribosomal subunit protein bL20 (134 aa).

Belongs to the bacterial ribosomal protein bL20 family.

In terms of biological role, binds directly to 23S ribosomal RNA and is necessary for the in vitro assembly process of the 50S ribosomal subunit. It is not involved in the protein synthesizing functions of that subunit. This is Large ribosomal subunit protein bL20 from Brucella abortus (strain S19).